We begin with the raw amino-acid sequence, 154 residues long: MGLSDGEWHLVLNVWGKWETDLAGHGQEVLIRLFKSHPETLEKFDKFKHLKSEDDMRRSFDLRKHGNTVLTALGGILKKKGHHEAELKPLAQSHATKHKIPIKYLEFISEAIIHVLHSKHPAEFGADAQAAMKKALELFRNDIAAKIKELGFHG.

The 147-residue stretch at 2 to 148 (GLSDGEWHLV…FRNDIAAKIK (147 aa)) folds into the Globin domain. Ser-4 is modified (phosphoserine). His-65 is a nitrite binding site. His-65 provides a ligand contact to O2. Thr-68 is modified (phosphothreonine). Heme b is bound at residue His-94.

It belongs to the globin family. In terms of assembly, monomeric.

The protein localises to the cytoplasm. The protein resides in the sarcoplasm. The enzyme catalyses Fe(III)-heme b-[protein] + nitric oxide + H2O = Fe(II)-heme b-[protein] + nitrite + 2 H(+). The catalysed reaction is H2O2 + AH2 = A + 2 H2O. Functionally, monomeric heme protein which primary function is to store oxygen and facilitate its diffusion within muscle tissues. Reversibly binds oxygen through a pentacoordinated heme iron and enables its timely and efficient release as needed during periods of heightened demand. Depending on the oxidative conditions of tissues and cells, and in addition to its ability to bind oxygen, it also has a nitrite reductase activity whereby it regulates the production of bioactive nitric oxide. Under stress conditions, like hypoxia and anoxia, it also protects cells against reactive oxygen species thanks to its pseudoperoxidase activity. The protein is Myoglobin (MB) of Pusa sibirica (Baikal seal).